The sequence spans 429 residues: MKNTYNLRSIAAKAISQVLDQGQSLSTVLPGLQKSISDKDRALLQELCFGTLRVLPQLEWCIQQLMARPMTGKQRVFHYLIMVGLYQLIYTRIPPHAALAETVEGATALKRPQLKGLINGVLRQFQRQQVELLERAANNDSHYLHPSWLLARIKLAYPDQWQQILDANNQKPPMWLRVNRLHHSRIEYLELLKQANIEALPHDFYPDAVRLITPCAVSDLPGFELGWVTVQDASAQGCVDLLDPQDGEQILDLCAAPGGKTTHILEAAPKVHVLAVDIDEQRLSRVKENLQRLRLHADVRVGDGRTPDEWCGDQQFDRILLDAPCSATGVIRRHPDIKWLRRDSDIAELAQLQSEIIEAIWPKLKKGGVMVYATCSILPEENQQQIATFLQRHSEADLVETGTVSALGRQNLPHPEDGDGFYYAKLIKR.

Residues 254-260 (CAAPGGK), D277, D303, and D322 contribute to the S-adenosyl-L-methionine site. The active-site Nucleophile is the C375.

The protein belongs to the class I-like SAM-binding methyltransferase superfamily. RsmB/NOP family.

The protein localises to the cytoplasm. It carries out the reaction cytidine(967) in 16S rRNA + S-adenosyl-L-methionine = 5-methylcytidine(967) in 16S rRNA + S-adenosyl-L-homocysteine + H(+). Specifically methylates the cytosine at position 967 (m5C967) of 16S rRNA. The sequence is that of Ribosomal RNA small subunit methyltransferase B from Yersinia enterocolitica serotype O:8 / biotype 1B (strain NCTC 13174 / 8081).